Here is a 445-residue protein sequence, read N- to C-terminus: tRNA modification GTPase MnmE (445 aa).

Arginine 24, glutamate 81, and lysine 121 together coordinate (6S)-5-formyl-5,6,7,8-tetrahydrofolate. Residues 218 to 369 (GLTVVIAGPP…LLEALVGFAR (152 aa)) form the TrmE-type G domain. GTP-binding positions include 228 to 233 (NAGKST), 247 to 253 (SPHAGTT), 272 to 275 (DTAG), and 350 to 352 (SAR). Mg(2+)-binding residues include serine 232 and threonine 253. Residue lysine 445 participates in (6S)-5-formyl-5,6,7,8-tetrahydrofolate binding.

Belongs to the TRAFAC class TrmE-Era-EngA-EngB-Septin-like GTPase superfamily. TrmE GTPase family. As to quaternary structure, homodimer. Heterotetramer of two MnmE and two MnmG subunits. K(+) is required as a cofactor.

The protein resides in the cytoplasm. Functionally, exhibits a very high intrinsic GTPase hydrolysis rate. Involved in the addition of a carboxymethylaminomethyl (cmnm) group at the wobble position (U34) of certain tRNAs, forming tRNA-cmnm(5)s(2)U34. The sequence is that of tRNA modification GTPase MnmE from Bradyrhizobium sp. (strain BTAi1 / ATCC BAA-1182).